Consider the following 440-residue polypeptide: Suppressor of cytokine signaling 4 (440 aa).

Residues 1-10 (MAENNENISK) show a composition bias toward polar residues. Positions 1-29 (MAENNENISKNVDVRPKTSRSRSADRKDG) are disordered. Basic and acidic residues predominate over residues 12–29 (VDVRPKTSRSRSADRKDG). The 96-residue stretch at 286 to 381 (CYWGVMDKYA…FFEPLLSTPL (96 aa)) folds into the SH2 domain. One can recognise an SOCS box domain in the interval 376–425 (LLSTPLIRTFPFSLQHICRTVICNCTTYDGIDALPIPSSMKLYLKEYHYK).

It participates in protein modification; protein ubiquitination. Its function is as follows. SOCS family proteins form part of a classical negative feedback system that regulates cytokine signal transduction. Substrate-recognition component of a SCF-like ECS (Elongin BC-CUL2/5-SOCS-box protein) E3 ubiquitin-protein ligase complex which mediates the ubiquitination and subsequent proteasomal degradation of target proteins. Inhibits EGF signaling by mediating the degradation of the Tyr-phosphorylated EGF receptor/EGFR. This Pongo abelii (Sumatran orangutan) protein is Suppressor of cytokine signaling 4 (SOCS4).